Consider the following 1719-residue polypeptide: Serine/threonine-protein kinase MRCK alpha (1719 aa).

The Protein kinase domain occupies 77 to 343 (FEILKVIGRG…IEDFKKHPFF (267 aa)). ATP contacts are provided by residues 83-91 (IGRGAFGEV) and lysine 106. Aspartate 201 (proton acceptor) is an active-site residue. 2 positions are modified to phosphoserine; by autocatalysis: serine 222 and serine 234. Threonine 240 is subject to Phosphothreonine; by autocatalysis. The 71-residue stretch at 344–414 (SGIDWDNIRN…TSSCVLSDRS (71 aa)) folds into the AGC-kinase C-terminal domain. Coiled-coil stretches lie at residues 437–670 (NNLA…KQKQ), 713–820 (SEIK…WEAQ), and 880–943 (LELQ…SEKG). Residues 999-1049 (THQFFVKSFTAPTKCHQCTSLMVGLIRQGCSCEVCGFSCHITCVNKAPTVC) form a Phorbol-ester/DAG-type zinc finger. The 120-residue stretch at 1069 to 1188 (GTAYEGHVRI…WVGVLSELHK (120 aa)) folds into the PH domain. One can recognise a CNH domain in the interval 1214-1486 (IKTTQAAAII…RPLNTEGSLN (273 aa)). A Phosphoserine modification is found at serine 1532. Residues 1558 to 1571 (ISNPTNFNHIAHMG) enclose the CRIB domain. Residues 1579 to 1719 (LKDLPMNPRP…ESTDRGSWDP (141 aa)) form a disordered region. The segment covering 1591–1606 (SRTVFSGSVSIPSITK) has biased composition (polar residues). Phosphoserine is present on residues serine 1598, serine 1600, serine 1616, serine 1638, serine 1651, serine 1656, serine 1680, serine 1706, and serine 1708. The span at 1612-1627 (GRSMSASSGLSARSSA) shows a compositional bias: low complexity. Residues 1652-1661 (PSEGSLSSGG) show a composition bias toward low complexity.

Belongs to the protein kinase superfamily. AGC Ser/Thr protein kinase family. DMPK subfamily. Homodimer and homotetramer via the coiled coil regions. Interacts tightly with GTP-bound but not GDP-bound CDC42. Forms a tripartite complex with MYO18A and LRP35A with the latter acting as an adapter connecting CDC42BPA and MYO18A. LRP35A binding results in activation of CDC42BPA by abolition of its negative autoregulation. Interacts with LURAP1. Interacts (via AGC-kinase C-terminal domain) with FAM89B/LRAP25 (via LRR repeat). Forms a tripartite complex with FAM89B/LRAP25 and LIMK1. Requires Mg(2+) as cofactor. Post-translationally, proteolytically cleaved by caspases upon apoptosis induction. The cleavage at Asp-478 by CASP3 increases its kinase activity (in vitro).

Its subcellular location is the cytoplasm. The protein localises to the cell projection. It localises to the lamellipodium. It catalyses the reaction L-seryl-[protein] + ATP = O-phospho-L-seryl-[protein] + ADP + H(+). The enzyme catalyses L-threonyl-[protein] + ATP = O-phospho-L-threonyl-[protein] + ADP + H(+). Its activity is regulated as follows. Maintained in an inactive, closed conformation by an interaction between the kinase domain and the negative autoregulatory C-terminal coiled-coil region. Agonist binding to the phorbol ester binding site disrupts this, releasing the kinase domain to allow N-terminus-mediated dimerization and kinase activation by transautophosphorylation. Inhibited by chelerythrine chloride. In terms of biological role, serine/threonine-protein kinase which is an important downstream effector of CDC42 and plays a role in the regulation of cytoskeleton reorganization and cell migration. Regulates actin cytoskeletal reorganization via phosphorylation of PPP1R12C and MYL9/MLC2. In concert with MYO18A and LRP35A, is involved in modulating lamellar actomyosin retrograde flow that is crucial to cell protrusion and migration. Phosphorylates: PPP1R12A and LIMK2. May play a role in TFRC-mediated iron uptake. In concert with FAM89B/LRAP25 mediates the targeting of LIMK1 to the lamellipodium resulting in its activation and subsequent phosphorylation of CFL1 which is important for lamellipodial F-actin regulation. Triggers the formation of an extrusion apical actin ring required for epithelial extrusion of apoptotic cells. The chain is Serine/threonine-protein kinase MRCK alpha (Cdc42bpa) from Mus musculus (Mouse).